We begin with the raw amino-acid sequence, 218 residues long: 3-phospho-D-glycerate guanylyltransferase (218 aa).

This sequence belongs to the CofC family.

It carries out the reaction (2R)-3-phosphoglycerate + GTP + H(+) = 3-[(R)-glyceryl]-diphospho-5'-guanosine + diphosphate. It functions in the pathway cofactor biosynthesis; coenzyme F420 biosynthesis. In terms of biological role, guanylyltransferase that catalyzes the activation of (2R)-3-phosphoglycerate (3PG) as 3-[(R)-glyceryl]-diphospho-5'-guanosine, via the condensation of 3PG with GTP. It is involved in the biosynthesis of a derivative of the hydride carrier cofactor coenzyme F420, 3PG-F420. The protein is 3-phospho-D-glycerate guanylyltransferase of Phenylobacterium zucineum (strain HLK1).